We begin with the raw amino-acid sequence, 654 residues long: Smc-like protein Sph3 (654 aa).

Coiled coils occupy residues 135–290 (TDAI…LQTV) and 341–503 (IRGT…LTAA).

It belongs to the Sph1/Sph2 family.

Functionally, involved in cell-shape determination. Required for the formation of rods and wild-type-like motility. In Haloferax volcanii (strain ATCC 29605 / DSM 3757 / JCM 8879 / NBRC 14742 / NCIMB 2012 / VKM B-1768 / DS2) (Halobacterium volcanii), this protein is Smc-like protein Sph3.